Consider the following 525-residue polypeptide: Histidine-rich glycoprotein (525 aa).

Residues 1–18 (MKVLTTALLLVTLQCSHA) form the signal peptide. The region spanning 19 to 122 (LSPTNCDASK…ESQDLSVNGY (104 aa)) is the Cystatin 1 domain. Intrachain disulfides connect Cys24–Cys504, Cys78–Cys89, Cys103–Cys124, Cys201–Cys414, and Cys216–Cys239. Residues 41–84 (GRRSGYTFQLLRVSDAHLDRVETATIYYLVLDVVESDCWVLSTK) are interaction with ATP5F1A. 2 N-linked (GlcNAc...) asparagine glycosylation sites follow: Asn112 and Asn123. The 106-residue stretch at 135–240 (NTKDSPVLVD…TPEYTDLICE (106 aa)) folds into the Cystatin 2 domain. The residue at position 145 (Ser145) is a Phosphoserine. Asn200 carries N-linked (GlcNAc...) asparagine glycosylation. The segment at 275-445 (RDHHHTHKTH…GHSRKRGPGK (171 aa)) is disordered. N-linked (GlcNAc...) asparagine glycosylation is found at Asn322 and Asn330. 2 stretches are compositionally biased toward basic residues: residues 339–392 (HGQH…HGHH) and 426–443 (QYHRGHGPPHGHSRKRGP). Ser438 is modified (phosphoserine).

In terms of assembly, interacts with THBS1 (via the TSP type I repeats); the interaction blocks the antiangiogenic effect of THBS1 with CD36. Interacts with HPSE; the interaction is enhanced at acidic pH, partially inhibits binding of HPSE to cell surface receptors and modulates its enzymatic activity. Interacts (via the HRR domain) with TMP1; the interaction partially mediates the antiangiogenic properties of HRG. Interacts with kappa and lambda light chains of IgG molecules. Interacts with ATP5F1A; the interaction occurs on the surface of T-cells and alters their cell morphology in concert with CONA. Binds IgG molecules containing kappa and lambda light chains and inhibits the formation of insoluble immunoglobulin complexes. Interacts with F12; the interaction, which is enhanced in the presence of zinc ions and inhibited by heparin-binding to HRG, inhibits factor XII autoactivation and contact-initiated coagulation. Interacts with PLG (via its Kringle domains); the interaction tethers PLG to the cell surface and enhances its activation. Interacts (via the HRR domain) with TPM1; the interaction appears to contribute to the antiangiogenic properties of the HRR domain. Interacts with THBS2; the interaction blocks the antiangiogenic effect of THBS2 with CD36. Post-translationally, N-glycosylated. Proteolytic cleavage produces several HRG fragments which are mostly disulfide-linked and, therefore, not released. Cleavage by plasmin is inhibited in the presence of heparin, zinc ions or in an acidic environment. Cleavage reduces binding of HRG to heparan sulfate, but enhances the ability of HRG to bind and tether plasminogen to the cell surface. On platelet activation, releases a 33 kDa antiangiogenic peptide which encompasses the HRR. Also cleaved in the C-terminal by plasmin. Expressed in liver, blood plasma, serum and in platelets. Also present in fibrin clots, wound fluid from acute wounds and chronic leg ulcers.

Its subcellular location is the secreted. Functionally, plasma glycoprotein that binds a number of ligands such as heme, heparin, heparan sulfate, thrombospondin, plasminogen, and divalent metal ions. Inhibits rosette formation. Acts as an adapter protein and implicated in regulating many processes such as immune complex and pathogen clearance, cell adhesion, angiogenesis, coagulation and fibrinolysis. Mediates clearance of necrotic cells through enhancing the phagocytosis of necrotic cells in a heparan sulfate-dependent pathway. This process can be regulated by the presence of certain HRG ligands such as heparin and zinc ions. Binds to IgG subclasses of immunoglobins containing kappa and lambda light chains with different affinities regulating their clearance and inhibiting the formation of insoluble immune complexes. Tethers plasminogen to the cell surface. Binds T-cells and alters the cell morphology. Modulates angiogenesis by blocking the CD6-mediated antiangiongenic effect of thrombospondins, THBS1 and THBS2. The chain is Histidine-rich glycoprotein (Hrg) from Rattus norvegicus (Rat).